An 80-amino-acid chain; its full sequence is Cell division protein ZapB (80 aa).

Positions 3 to 80 form a coiled coil; it reads FEVLEQLEAK…NLLGKMDDVE (78 aa).

This sequence belongs to the ZapB family. In terms of assembly, homodimer. The ends of the coiled-coil dimer bind to each other, forming polymers. Interacts with FtsZ.

The protein localises to the cytoplasm. Functionally, non-essential, abundant cell division factor that is required for proper Z-ring formation. It is recruited early to the divisome by direct interaction with FtsZ, stimulating Z-ring assembly and thereby promoting cell division earlier in the cell cycle. Its recruitment to the Z-ring requires functional FtsA or ZipA. The chain is Cell division protein ZapB from Vibrio atlanticus (strain LGP32) (Vibrio splendidus (strain Mel32)).